Reading from the N-terminus, the 1284-residue chain is DNA-directed RNA polymerase subunit beta (1284 aa).

This sequence belongs to the RNA polymerase beta chain family. The RNAP catalytic core consists of 2 alpha, 1 beta, 1 beta' and 1 omega subunit. When a sigma factor is associated with the core the holoenzyme is formed, which can initiate transcription.

It catalyses the reaction RNA(n) + a ribonucleoside 5'-triphosphate = RNA(n+1) + diphosphate. In terms of biological role, DNA-dependent RNA polymerase catalyzes the transcription of DNA into RNA using the four ribonucleoside triphosphates as substrates. This Mesoplasma florum (strain ATCC 33453 / NBRC 100688 / NCTC 11704 / L1) (Acholeplasma florum) protein is DNA-directed RNA polymerase subunit beta.